Reading from the N-terminus, the 334-residue chain is Endoplasmic reticulum junction formation protein lunapark (334 aa).

At 1–40 (MGWFFQKKKEFDFGGELDRLEMKLEEAQYNIDNIQSQKKK) the chain is on the cytoplasmic side. Residues 12 to 42 (DFGGELDRLEMKLEEAQYNIDNIQSQKKKIL) adopt a coiled-coil conformation. Residues 41 to 61 (ILFRYTVCSLAIYTIGMAVWA) form a helical membrane-spanning segment. Over 62–78 (SRSSILFQHPLFSKLFR) the chain is Lumenal. The helical transmembrane segment at 79-99 (ISLYILGVFSLYMFRWAIAWF) threads the bilayer. A coiled-coil region spans residues 99-127 (FCEKRLSRARMNLHKLNAEKRKILDALKS). Residues 100 to 334 (CEKRLSRARM…SVPESLTPTK (235 aa)) lie on the Cytoplasmic side of the membrane. Residues 201 to 227 (CSHCFHHNGLASYGEKASDVRYVCLFC) form a C4-type; plays a role in ER morphology zinc finger. Positions 237 to 315 (KSLPSSEMDS…SSPDASYNSV (79 aa)) are disordered. The segment covering 239–252 (LPSSEMDSNLQTNP) has biased composition (polar residues). Low complexity predominate over residues 253–270 (SSISKGKKNNSNNTTQKG). Positions 273–283 (IISSPQVINAS) are enriched in polar residues. S284 bears the Phosphoserine mark. A compositionally biased stretch (low complexity) spans 297–315 (ALPTSPLSSSSPDASYNSV).

The protein belongs to the lunapark family.

It is found in the endoplasmic reticulum membrane. The protein localises to the golgi apparatus membrane. Plays a role in tubular endoplasmic reticulum network formation and maintenance. In Schizosaccharomyces pombe (strain 972 / ATCC 24843) (Fission yeast), this protein is Endoplasmic reticulum junction formation protein lunapark (lnp1).